A 229-amino-acid polypeptide reads, in one-letter code: MEFSQKLYQAAKPIINDIYEDDFIQKMLLGNIQADALRHYLQADAAYLKEFTNLYALLIPKMNSMNDVKFLVEQIEFMVEGEVLAHDILAQIVGESYEEIIKTKVWPPSGDHYIKHMYFQAHSRENAIYTIAAMAPCPYIYAELAKRSQSDHKLNREKDTAKWFDFYSTEMDDIINVFESLMNKLAESMSDKELEQVKQVFLESCIHERRFFNMAMTLEQWEFGGKVND.

Substrate is bound at residue D44. The active-site Nucleophile is C137. Substrate is bound by residues Y141 and Y167. E208 acts as the Proton donor in catalysis.

This sequence belongs to the TenA family. Homotetramer.

The enzyme catalyses 4-amino-5-aminomethyl-2-methylpyrimidine + H2O = 4-amino-5-hydroxymethyl-2-methylpyrimidine + NH4(+). It catalyses the reaction thiamine + H2O = 5-(2-hydroxyethyl)-4-methylthiazole + 4-amino-5-hydroxymethyl-2-methylpyrimidine + H(+). It participates in cofactor biosynthesis; thiamine diphosphate biosynthesis. Catalyzes an amino-pyrimidine hydrolysis reaction at the C5' of the pyrimidine moiety of thiamine compounds, a reaction that is part of a thiamine salvage pathway. Thus, catalyzes the conversion of 4-amino-5-aminomethyl-2-methylpyrimidine to 4-amino-5-hydroxymethyl-2-methylpyrimidine (HMP). Is also able to catalyze the hydrolytic cleavage of thiamine; however, this thiaminase activity may not be physiologically relevant. Therefore, is probably involved in the regeneration of the thiamine pyrimidine from thiamine degraded products present in the environment, rather than in thiamine degradation. This chain is Aminopyrimidine aminohydrolase, found in Staphylococcus aureus (strain MRSA252).